Reading from the N-terminus, the 603-residue chain is Translation initiation factor IF-2 (603 aa).

In terms of domain architecture, tr-type G spans 112–279 (TRPPIITIMG…NINLQAEILD (168 aa)). The segment at 121–128 (GHVDHGKT) is G1. 121–128 (GHVDHGKT) is a GTP binding site. Residues 146-150 (GITQH) are G2. Residues 167–170 (DTPG) form a G3 region. GTP-binding positions include 167–171 (DTPGH) and 221–224 (NKMD). The G4 stretch occupies residues 221-224 (NKMD). Residues 257–259 (SAL) form a G5 region.

Belongs to the TRAFAC class translation factor GTPase superfamily. Classic translation factor GTPase family. IF-2 subfamily.

Its subcellular location is the cytoplasm. One of the essential components for the initiation of protein synthesis. Protects formylmethionyl-tRNA from spontaneous hydrolysis and promotes its binding to the 30S ribosomal subunits. Also involved in the hydrolysis of GTP during the formation of the 70S ribosomal complex. This chain is Translation initiation factor IF-2, found in Mycoplasmopsis pulmonis (strain UAB CTIP) (Mycoplasma pulmonis).